The sequence spans 375 residues: Eukaryotic translation initiation factor 3 subunit M (375 aa).

In terms of domain architecture, PCI spans 180-339 (AAAKVMVELL…RKVVVSHSTH (160 aa)).

Belongs to the eIF-3 subunit M family. Component of the eukaryotic translation initiation factor 3 (eIF-3) complex, which is composed of 13 subunits: eif3a, eif3b, eif3c, eif3d, eif3e, eif3f, eif3g, eif3h, eif3i, eif3j, eif3k, eif3l and eif3m.

The protein localises to the cytoplasm. Its function is as follows. Component of the eukaryotic translation initiation factor 3 (eIF-3) complex, which is involved in protein synthesis of a specialized repertoire of mRNAs and, together with other initiation factors, stimulates binding of mRNA and methionyl-tRNAi to the 40S ribosome. The eIF-3 complex specifically targets and initiates translation of a subset of mRNAs involved in cell proliferation. The polypeptide is Eukaryotic translation initiation factor 3 subunit M (eif3m) (Danio rerio (Zebrafish)).